Consider the following 886-residue polypeptide: uncharacterized protein (886 aa).

Residues 1 to 20 form the signal peptide; that stretch reads MKIIKSLILLVLFMASPAKG. The next 5 membrane-spanning stretches (helical) occupy residues 520–540, 609–629, 647–667, 680–700, and 779–799; these read VTIF…VEVV, LLFI…IITI, VIAF…IILM, ISIL…FLLI, and LLFY…TIVV. The interval 856 to 886 is disordered; that stretch reads EARKPQGGGEHTGKFFQNRNDVKPEQTERND. Residues 875 to 886 are compositionally biased toward basic and acidic residues; the sequence is NDVKPEQTERND.

It belongs to the TrbL/VirB6 family.

It localises to the cell membrane. This is an uncharacterized protein from Rickettsia bellii (strain RML369-C).